Consider the following 605-residue polypeptide: MQMIGGEMWTAAGRRLHQQRDLHAILRTAHRRCCTRPIGGGLDAPAAPPGDLRTLSGVGMLIHQFKALLAPKKIYPWRSSHLQSLEVRRLHTAPSNAAAAAAVTDGGDQDKTKSAKDDDGDDKVQCKKEKIVTATKKGAAVLDQYIPDNIKTAYHVLQVGDEIYDATMNQTNVGGNNNKFYIIQALESDAGGNFMVYSRWGRVGTRDIHWSYRKGSHCYAHKYTWLEMDYGEADKETNKKTSSITNQLEETKLETRTASFISLICDISMMKQQMVEIGYNADKLPLGKLSKSTILKGYDVLKRISNVISGADTDRTQLEQLTGEFYSVIPHDFGFKKMSEFIIDTPQKLKAKLEMVEALSEIEIAIKLLEDDSSDQDHPLYARYKQFCCDFTPLEVDSEEYSMIKTYLTNTHGKTHTGYTVDIVQIFKVSRLGEMERFQKFASAGNRMLLWHGSRLTNWAGILSQGLRIAPPEAPISGFMFGKGVYFADMFSKSANYCCASEACKSGVMLLCEVALGEMNELLYGDFGADNLPNGKLSTKGVGQTEPNIAESKITDDGMVIPLGKPEKVPSRRGSLMYNEYIVYNVDQIRMRYILNVNFNFKRWG.

Positions 96–122 (NAAAAAAVTDGGDQDKTKSAKDDDGDD) are disordered. The span at 108-122 (DQDKTKSAKDDDGDD) shows a compositional bias: basic and acidic residues. The region spanning 153 to 260 (AYHVLQVGDE…TKLETRTASF (108 aa)) is the WGR domain. The PARP alpha-helical domain occupies 250-370 (ETKLETRTAS…EIEIAIKLLE (121 aa)). One can recognise a PARP catalytic domain in the interval 378-605 (HPLYARYKQF…NVNFNFKRWG (228 aa)).

Belongs to the ARTD/PARP family.

It localises to the nucleus. The enzyme catalyses NAD(+) + (ADP-D-ribosyl)n-acceptor = nicotinamide + (ADP-D-ribosyl)n+1-acceptor + H(+).. The catalysed reaction is L-aspartyl-[protein] + NAD(+) = 4-O-(ADP-D-ribosyl)-L-aspartyl-[protein] + nicotinamide. It carries out the reaction L-glutamyl-[protein] + NAD(+) = 5-O-(ADP-D-ribosyl)-L-glutamyl-[protein] + nicotinamide. Functionally, involved in the base excision repair (BER) pathway, by catalyzing the poly(ADP-ribosyl)ation of a limited number of acceptor proteins involved in chromatin architecture and in DNA metabolism. This modification follows DNA damages and appears as an obligatory step in a detection/signaling pathway leading to the reparation of DNA strand breaks. This chain is Poly [ADP-ribose] polymerase 2-B (PARP2-B), found in Oryza sativa subsp. japonica (Rice).